Reading from the N-terminus, the 789-residue chain is Alpha-glucosidase 2 (789 aa).

Disordered regions lie at residues 1-24 (MTGL…PRVI) and 512-531 (ELNP…ASHP). Catalysis depends on Asp523, which acts as the Proton donor. Glu756 acts as the Proton acceptor in catalysis.

It belongs to the glycosyl hydrolase 63 family.

The protein operates within glycan metabolism; N-glycan degradation. The sequence is that of Alpha-glucosidase 2 (GCS2) from Arabidopsis thaliana (Mouse-ear cress).